The primary structure comprises 158 residues: Large ribosomal subunit protein bL21 (158 aa).

Positions 106–158 (SKPKKAAAKPIKEEATAAKGTKDTAVEKKAEKTAEKKTASQKKAAVASKSKKD) are disordered. The segment covering 115–143 (PIKEEATAAKGTKDTAVEKKAEKTAEKKT) has biased composition (basic and acidic residues). A compositionally biased stretch (low complexity) spans 146–158 (QKKAAVASKSKKD).

The protein belongs to the bacterial ribosomal protein bL21 family. Part of the 50S ribosomal subunit. Contacts protein L20.

Functionally, this protein binds to 23S rRNA in the presence of protein L20. In Bartonella tribocorum (strain CIP 105476 / IBS 506), this protein is Large ribosomal subunit protein bL21.